The chain runs to 479 residues: NADH dehydrogenase [ubiquinone] flavoprotein 1, mitochondrial (479 aa).

103–112 (GRGGAGFPSG) serves as a coordination point for NADH. 216–264 (RGAGAYICGEETALIESIEGKQGKPRLKPPFPAMAGLYGCPTTVTNVET) lines the FMN pocket. [4Fe-4S] cluster is bound by residues cysteine 396, cysteine 399, cysteine 402, and cysteine 442.

Belongs to the complex I 51 kDa subunit family. As to quaternary structure, complex I is composed of about 45 different subunits. This is a component of the flavoprotein-sulfur (FP) fragment of the enzyme. The cofactor is FMN. It depends on [4Fe-4S] cluster as a cofactor.

It localises to the mitochondrion inner membrane. It carries out the reaction a ubiquinone + NADH + 5 H(+)(in) = a ubiquinol + NAD(+) + 4 H(+)(out). Its function is as follows. Core subunit of the mitochondrial membrane respiratory chain NADH dehydrogenase (Complex I) that is believed to belong to the minimal assembly required for catalysis. Complex I functions in the transfer of electrons from NADH to the respiratory chain. The immediate electron acceptor for the enzyme is believed to be ubiquinone. The polypeptide is NADH dehydrogenase [ubiquinone] flavoprotein 1, mitochondrial (ndufv1) (Dictyostelium discoideum (Social amoeba)).